The sequence spans 217 residues: Large ribosomal subunit protein uL1 (217 aa).

This sequence belongs to the universal ribosomal protein uL1 family. In terms of assembly, part of the 50S ribosomal subunit.

Functionally, binds directly to 23S rRNA. The L1 stalk is quite mobile in the ribosome, and is involved in E site tRNA release. Protein L1 is also a translational repressor protein, it controls the translation of the L11 operon by binding to its mRNA. The protein is Large ribosomal subunit protein uL1 of Anaplasma marginale (strain St. Maries).